The sequence spans 407 residues: MTIENTQNINIDTLSRRYSTQIQRRKTRSVMVGNIGIGSDYPVAVQSMINEDTLDIEASTSAIRRLHEIGCEIVRLTVPSLSHAKAVGEIKRRLEQNYLPVPLVADVHHNGMKIALEVAKHVDKVRINPGLFVFSNPDPSRTEFSNSEISAIKEKIINNFEPIVNTLKAQNKALRIGVNHGSLAERMLFQYGDTPLGMVESAMEFVRICDSLDFHNIVISMKASRPPVMLAAYRLMADAMDKEGFNYPLHLGVTEAGDGDYGRIKSTVGIGTLLTEGLGDTIRVSLTEAPEKEIPVAYSILQTVGLRKTMVEYISCPSCGRTLFNLEEVVAKVRDATSHLTGLDIAVMGCIVNGPGEMADADYGYVGKGKGIIALYRGREEIRKVPEDEGVSALVELIKSDGKWIDP.

Positions 316, 319, 350, and 357 each coordinate [4Fe-4S] cluster.

It belongs to the IspG family. It depends on [4Fe-4S] cluster as a cofactor.

The enzyme catalyses (2E)-4-hydroxy-3-methylbut-2-enyl diphosphate + 2 oxidized [2Fe-2S]-[ferredoxin] + H2O = 2-C-methyl-D-erythritol 2,4-cyclic diphosphate + 2 reduced [2Fe-2S]-[ferredoxin] + H(+). Its pathway is isoprenoid biosynthesis; isopentenyl diphosphate biosynthesis via DXP pathway; isopentenyl diphosphate from 1-deoxy-D-xylulose 5-phosphate: step 5/6. Functionally, converts 2C-methyl-D-erythritol 2,4-cyclodiphosphate (ME-2,4cPP) into 1-hydroxy-2-methyl-2-(E)-butenyl 4-diphosphate. This is 4-hydroxy-3-methylbut-2-en-1-yl diphosphate synthase (ferredoxin) from Prochlorococcus marinus (strain SARG / CCMP1375 / SS120).